Reading from the N-terminus, the 100-residue chain is Large ribosomal subunit protein bL28 (100 aa).

It belongs to the bacterial ribosomal protein bL28 family.

This Ehrlichia ruminantium (strain Gardel) protein is Large ribosomal subunit protein bL28.